A 320-amino-acid polypeptide reads, in one-letter code: Na(+)-translocating NADH-quinone reductase subunit C (320 aa).

The helical transmembrane segment at 16–36 (WYIVSFILGLSLFAGVLLSTI) threads the bilayer. T285 carries the post-translational modification FMN phosphoryl threonine.

The protein belongs to the NqrC family. In terms of assembly, composed of six subunits; NqrA, NqrB, NqrC, NqrD, NqrE and NqrF. FMN serves as cofactor.

It is found in the cell inner membrane. The enzyme catalyses a ubiquinone + n Na(+)(in) + NADH + H(+) = a ubiquinol + n Na(+)(out) + NAD(+). In terms of biological role, NQR complex catalyzes the reduction of ubiquinone-1 to ubiquinol by two successive reactions, coupled with the transport of Na(+) ions from the cytoplasm to the periplasm. NqrA to NqrE are probably involved in the second step, the conversion of ubisemiquinone to ubiquinol. In Chlamydia pneumoniae (Chlamydophila pneumoniae), this protein is Na(+)-translocating NADH-quinone reductase subunit C.